The primary structure comprises 366 residues: Phospho-N-acetylmuramoyl-pentapeptide-transferase (366 aa).

10 consecutive transmembrane segments (helical) span residues 27–47 (AALF…IASL), 71–91 (TPTM…LLWA), 93–113 (LSSI…AIGF), 138–158 (FVIA…AGAA), 174–194 (LMLN…VGAG), 205–225 (GLAI…AYLA), 245–265 (LAVI…FNAP), 268–288 (AIFM…TVAV), 297–317 (VIIG…VFWF), and 343–363 (QVVI…LSTL).

This sequence belongs to the glycosyltransferase 4 family. MraY subfamily. It depends on Mg(2+) as a cofactor.

Its subcellular location is the cell inner membrane. The catalysed reaction is UDP-N-acetyl-alpha-D-muramoyl-L-alanyl-gamma-D-glutamyl-meso-2,6-diaminopimeloyl-D-alanyl-D-alanine + di-trans,octa-cis-undecaprenyl phosphate = di-trans,octa-cis-undecaprenyl diphospho-N-acetyl-alpha-D-muramoyl-L-alanyl-D-glutamyl-meso-2,6-diaminopimeloyl-D-alanyl-D-alanine + UMP. It participates in cell wall biogenesis; peptidoglycan biosynthesis. Catalyzes the initial step of the lipid cycle reactions in the biosynthesis of the cell wall peptidoglycan: transfers peptidoglycan precursor phospho-MurNAc-pentapeptide from UDP-MurNAc-pentapeptide onto the lipid carrier undecaprenyl phosphate, yielding undecaprenyl-pyrophosphoryl-MurNAc-pentapeptide, known as lipid I. This is Phospho-N-acetylmuramoyl-pentapeptide-transferase from Sinorhizobium medicae (strain WSM419) (Ensifer medicae).